The chain runs to 84 residues: Antimicrobial peptide MeuNaTxbeta-2 (84 aa).

The N-terminal stretch at 1–20 is a signal peptide; sequence MMKTVIVLIVFSLVMIVVKS. In terms of domain architecture, LCN-type CS-alpha/beta spans 21–83; the sequence is DNGYLLDKYT…LWHYETNRCR (63 aa). 4 cysteine pairs are disulfide-bonded: Cys-32-Cys-82, Cys-36-Cys-57, Cys-43-Cys-64, and Cys-47-Cys-66.

Expressed by the venom gland.

It localises to the secreted. Antimicrobial peptide with activity against both Gram-positive and -negative bacteria. The sequence is that of Antimicrobial peptide MeuNaTxbeta-2 from Mesobuthus eupeus (Lesser Asian scorpion).